The primary structure comprises 114 residues: Iron-sulfur cluster insertion protein ErpA (114 aa).

Residues cysteine 42, cysteine 106, and cysteine 108 each contribute to the iron-sulfur cluster site.

The protein belongs to the HesB/IscA family. Homodimer. It depends on iron-sulfur cluster as a cofactor.

Functionally, required for insertion of 4Fe-4S clusters for at least IspG. This is Iron-sulfur cluster insertion protein ErpA from Sodalis glossinidius (strain morsitans).